The following is a 329-amino-acid chain: uncharacterized protein (329 aa).

The disordered stretch occupies residues M1–S20.

This is an uncharacterized protein from Mycobacterium tuberculosis (strain CDC 1551 / Oshkosh).